Consider the following 252-residue polypeptide: 3-dehydroquinate dehydratase (252 aa).

Residues serine 21, 46-48, and arginine 82 each bind 3-dehydroquinate; that span reads EWR. Histidine 143 acts as the Proton donor/acceptor in catalysis. Lysine 170 acts as the Schiff-base intermediate with substrate in catalysis. Arginine 213, serine 232, and glutamine 236 together coordinate 3-dehydroquinate.

The protein belongs to the type-I 3-dehydroquinase family. In terms of assembly, homodimer.

It catalyses the reaction 3-dehydroquinate = 3-dehydroshikimate + H2O. It functions in the pathway metabolic intermediate biosynthesis; chorismate biosynthesis; chorismate from D-erythrose 4-phosphate and phosphoenolpyruvate: step 3/7. Its function is as follows. Involved in the third step of the chorismate pathway, which leads to the biosynthesis of aromatic amino acids. Catalyzes the cis-dehydration of 3-dehydroquinate (DHQ) and introduces the first double bond of the aromatic ring to yield 3-dehydroshikimate. This chain is 3-dehydroquinate dehydratase, found in Escherichia coli O6:K15:H31 (strain 536 / UPEC).